A 491-amino-acid polypeptide reads, in one-letter code: Immediate early protein IE1 (491 aa).

Residues 1 to 11 (MESSAKRKMDP) show a composition bias toward basic and acidic residues. Positions 1–24 (MESSAKRKMDPDNPDEGPSSKVPR) are nuclear localization signal. Residues 1-30 (MESSAKRKMDPDNPDEGPSSKVPRPETPVT) form a disordered region. Positions 132–346 (ILDKVHEPFE…SVMKRRIEEI (215 aa)) are interaction with host PML, interference with PML sumoylation and disruption of PML-associated nuclear bodies. The segment at 373-445 (AIAEESDEEE…EEGAQEERED (73 aa)) is interaction with host STAT2. The interval 410-420 (ATIPLSSVIVA) is modulation of STAT3/STAT1 signaling. Positions 410 to 445 (ATIPLSSVIVAENSDQEESEQSDEEEEEGAQEERED) are interaction with host STAT3. Residues 421–472 (ENSDQEESEQSDEEEEEGAQEEREDTVSVKSEPVSEIEEVAPEEEEDGAEEP) are acidic. The disordered stretch occupies residues 421-491 (ENSDQEESEQ…PMVTRSKADQ (71 aa)). The segment covering 423–444 (SDQEESEQSDEEEEEGAQEERE) has biased composition (acidic residues). Residues 449–452 (VKSE) form an interaction with host SUMO1 region. Lys450 is covalently cross-linked (Glycyl lysine isopeptide (Lys-Gly) (interchain with G-Cter in SUMO)). The span at 455-470 (SEIEEVAPEEEEDGAE) shows a compositional bias: acidic residues. Residues 475–491 (SGGKSTHPMVTRSKADQ) form a chromosome-tethering domain (CTD), binding to histones region.

The protein belongs to the HHV-5 IE1 protein family. In terms of assembly, forms homodimers. Interacts with human p53/TP53; this interaction inhibits p53/TP53-dependent transactivation activity. Interacts with host STAT1. Interacts with host STAT2; this interaction promotes viral growth and counteracts the antiviral interferon response. May also interact with the host STAT1-STAT2 heterodimer. Interacts with host STAT3; this interaction leads to STAT3 nuclear accumulation and disruption of IL6-induced STAT3 phosphorylation. Interacts with host PML; this interaction inhibits host PML de novo sumoylation and probably inhibits PML regulation of type I and type II interferon-induced gene expression. Interacts with host DAXX. Interacts with host SP100. Interacts with host E2F1. Interacts with host RB1. Interacts with host HDAC1; this interaction inhibits histone deacetylation and promotes viral transcription. Interacts with host HDAC2; this interaction inhibits histone deacetylation and promotes viral transcription. Interacts with host HDAC3; this interaction inhibits histone deacetylation and promotes viral transcription. Interacts with host PLSCR1; this interaction inhibits IE1 transactivating activity. Post-translationally, sumoylated by host PML. Sumoylation abolishes the interaction with host STAT2 and thus the IE1-mediated repression of interferon-stimulated genes.

The protein resides in the host nucleus. In terms of biological role, plays an important role in transactivating viral early genes as well as activating its own promoter, probably by altering the viral chromatin structure. Expression of IE1 and IE2 proteins is critical for the establishment of lytic infection and reactivation from viral latency. Disrupts PML-associated ND10 nuclear bodies by interfering with host PML and SP100 sumoylation thereby altering the regulation of type I and type II interferon-induced gene expression. Promotes efficient viral growth by interacting with and directing host SP100 to degradation, leading to enhanced acetylation level of histones. In addition, functions in counteracting the host innate antiviral response. Inhibits the type I interferon pathway by directly interacting with and sequestrating host STAT2. Also targets type II interferon pathway by repressing IL6- and STAT3 target genes. Repression of STAT3 genes is due to STAT3 nuclear accumulation and disruption of IL6-induced STAT3 phosphorylation by IE1. This repression is followed by phosphorylation and activation of STAT1. Inhibits host ISG transcription by sequestering host ISGF3 in a PML- and STAT2- binding dependent manner. Alters host cell cycle progression, probably through its interaction with host E2F1 or RB1 that overcomes the RB1-mediated repression of E2F-responsive promoters. In Human cytomegalovirus (strain AD169) (HHV-5), this protein is Immediate early protein IE1 (UL123).